Here is a 619-residue protein sequence, read N- to C-terminus: Chaperone protein HscA homolog (619 aa).

The protein belongs to the heat shock protein 70 family.

Its function is as follows. Chaperone involved in the maturation of iron-sulfur cluster-containing proteins. Has a low intrinsic ATPase activity which is markedly stimulated by HscB. The protein is Chaperone protein HscA homolog of Pseudomonas paraeruginosa (strain DSM 24068 / PA7) (Pseudomonas aeruginosa (strain PA7)).